A 631-amino-acid chain; its full sequence is Phosphomethylpyrimidine synthase (631 aa).

Substrate contacts are provided by residues Asn-239, Met-268, Tyr-297, His-333, Ser-353–Gly-355, Asp-394–Arg-397, and Glu-433. His-437 serves as a coordination point for Zn(2+). Tyr-460 serves as a coordination point for substrate. His-501 is a Zn(2+) binding site. The [4Fe-4S] cluster site is built by Cys-581, Cys-584, and Cys-589.

Belongs to the ThiC family. In terms of assembly, homodimer. Requires [4Fe-4S] cluster as cofactor.

The enzyme catalyses 5-amino-1-(5-phospho-beta-D-ribosyl)imidazole + S-adenosyl-L-methionine = 4-amino-2-methyl-5-(phosphooxymethyl)pyrimidine + CO + 5'-deoxyadenosine + formate + L-methionine + 3 H(+). The protein operates within cofactor biosynthesis; thiamine diphosphate biosynthesis. In terms of biological role, catalyzes the synthesis of the hydroxymethylpyrimidine phosphate (HMP-P) moiety of thiamine from aminoimidazole ribotide (AIR) in a radical S-adenosyl-L-methionine (SAM)-dependent reaction. The protein is Phosphomethylpyrimidine synthase of Salmonella paratyphi A (strain AKU_12601).